We begin with the raw amino-acid sequence, 559 residues long: D-2-hydroxyglutarate dehydrogenase, mitochondrial (559 aa).

A mitochondrion-targeting transit peptide spans 1–78 (MMMQKLRRSG…GMLLQQYKCF (78 aa)). Positions 130-309 (YKGSSKLMLL…TKVSILTQPK (180 aa)) constitute an FAD-binding PCMH-type domain.

Belongs to the FAD-binding oxidoreductase/transferase type 4 family. Homodimer. Requires FAD as cofactor.

Its subcellular location is the mitochondrion. It catalyses the reaction (R)-2-hydroxyglutarate + A = 2-oxoglutarate + AH2. Functionally, catalyzes the oxidation of (R)-2-hydroxyglutarate to 2-oxoglutarate. May be involved in the catabolism of propionyl-CoA derived from beta-oxidation. Involved in degradation of lysine for the supply of carbon and electrons to the ETF/ETFQO complex during dark-induced sugar starvation. In Arabidopsis thaliana (Mouse-ear cress), this protein is D-2-hydroxyglutarate dehydrogenase, mitochondrial (D2HGDH).